The primary structure comprises 86 residues: MNFQPLGKRVLVERVEETKTTASGIIIPDNAKEKPLSGEVKAVGAEAEGVKVGEKVVFAKYAGTEVNLDDKTYLVLNIDDILGVIK.

Belongs to the GroES chaperonin family. In terms of assembly, heptamer of 7 subunits arranged in a ring. Interacts with the chaperonin GroEL.

Its subcellular location is the cytoplasm. Together with the chaperonin GroEL, plays an essential role in assisting protein folding. The GroEL-GroES system forms a nano-cage that allows encapsulation of the non-native substrate proteins and provides a physical environment optimized to promote and accelerate protein folding. GroES binds to the apical surface of the GroEL ring, thereby capping the opening of the GroEL channel. The sequence is that of Co-chaperonin GroES from Campylobacter concisus (strain 13826).